Here is a 281-residue protein sequence, read N- to C-terminus: 2-dehydro-3-deoxyphosphooctonate aldolase (281 aa).

Belongs to the KdsA family.

Its subcellular location is the cytoplasm. The enzyme catalyses D-arabinose 5-phosphate + phosphoenolpyruvate + H2O = 3-deoxy-alpha-D-manno-2-octulosonate-8-phosphate + phosphate. Its pathway is carbohydrate biosynthesis; 3-deoxy-D-manno-octulosonate biosynthesis; 3-deoxy-D-manno-octulosonate from D-ribulose 5-phosphate: step 2/3. It participates in bacterial outer membrane biogenesis; lipopolysaccharide biosynthesis. This chain is 2-dehydro-3-deoxyphosphooctonate aldolase, found in Marinobacter nauticus (strain ATCC 700491 / DSM 11845 / VT8) (Marinobacter aquaeolei).